Here is a 282-residue protein sequence, read N- to C-terminus: Acetyl-coenzyme A carboxylase carboxyl transferase subunit beta (282 aa).

A CoA carboxyltransferase N-terminal domain is found at glycine 26–histidine 282.

Belongs to the AccD/PCCB family. Acetyl-CoA carboxylase is a heterohexamer composed of biotin carboxyl carrier protein (AccB), biotin carboxylase (AccC) and two subunits each of ACCase subunit alpha (AccA) and ACCase subunit beta (AccD).

It is found in the cytoplasm. It carries out the reaction N(6)-carboxybiotinyl-L-lysyl-[protein] + acetyl-CoA = N(6)-biotinyl-L-lysyl-[protein] + malonyl-CoA. It participates in lipid metabolism; malonyl-CoA biosynthesis; malonyl-CoA from acetyl-CoA: step 1/1. In terms of biological role, component of the acetyl coenzyme A carboxylase (ACC) complex. Biotin carboxylase (BC) catalyzes the carboxylation of biotin on its carrier protein (BCCP) and then the CO(2) group is transferred by the transcarboxylase to acetyl-CoA to form malonyl-CoA. The protein is Acetyl-coenzyme A carboxylase carboxyl transferase subunit beta of Flavobacteriaceae bacterium (strain 3519-10).